Consider the following 351-residue polypeptide: Delta(7)-sterol 5(6)-desaturase (351 aa).

3 helical membrane-spanning segments follow: residues 88–108 (LSLF…VASF), 136–156 (GLGA…LELH), and 173–193 (VRLA…IYLL). The Fatty acid hydroxylase domain occupies 180-305 (LFFILFTDFG…FTTLWDRLGG (126 aa)). The Histidine box-1 motif lies at 194–198 (HRWLH). Positions 207 to 211 (HKKHH) match the Histidine box-2 motif. A helical membrane pass occupies residues 237 to 257 (HLFPMLFPLHKVSYLVLFTFV). Residues 282–286 (HTVHH) carry the Histidine box-3 motif.

It belongs to the sterol desaturase family. It depends on Fe cation as a cofactor.

The protein resides in the endoplasmic reticulum membrane. It catalyses the reaction a Delta(7)-sterol + 2 Fe(II)-[cytochrome b5] + O2 + 2 H(+) = a Delta(5),Delta(7)-sterol + 2 Fe(III)-[cytochrome b5] + 2 H2O. It functions in the pathway steroid metabolism; ergosterol biosynthesis; ergosterol from zymosterol: step 3/5. In terms of biological role, catalyzes the introduction of a C-5 double bond in the B ring of ergosterol. May contribute to the regulation of ergosterol biosynthesis. This is Delta(7)-sterol 5(6)-desaturase (ERG3) from Eremothecium gossypii (strain ATCC 10895 / CBS 109.51 / FGSC 9923 / NRRL Y-1056) (Yeast).